The sequence spans 539 residues: Acid-sensing ion channel 4-A (539 aa).

Over 1–68 (MPIEFVCKIK…SGRLGVRQTL (68 aa)) the chain is Cytoplasmic. The chain crosses the membrane as a helical span at residues 69–89 (WALAFLVSLALFLYQAAKCAI). The Extracellular portion of the chain corresponds to 90–432 (SYLEHPHVTA…EQKKAYDVAG (343 aa)). Disulfide bonds link Cys-116/Cys-200 and Cys-178/Cys-185. Asn-136, Asn-165, Asn-179, Asn-184, Asn-206, and Asn-241 each carry an N-linked (GlcNAc...) asparagine glycan. 5 disulfide bridges follow: Cys-294-Cys-369, Cys-313-Cys-365, Cys-317-Cys-363, Cys-326-Cys-347, and Cys-328-Cys-340. N-linked (GlcNAc...) asparagine glycosylation occurs at Asn-370. The helical transmembrane segment at 433-453 (LLGDIGGQMGLFIGASVLTIL) threads the bilayer. The GAS motif; ion selectivity filter motif lies at 446–448 (GAS). At 454 to 539 (EILDYVYEVI…HHRVSEDFAC (86 aa)) the chain is on the cytoplasmic side. Residues 474–494 (QRDDKKQTQQQQQASTVATVN) form a disordered region.

Belongs to the amiloride-sensitive sodium channel (TC 1.A.6) family. ASIC4 subfamily. As to quaternary structure, homotrimer. Heterotrimer; with other ASIC proteins producing functional channels. In terms of tissue distribution, expressed in central nervous system.

Its subcellular location is the cell membrane. The enzyme catalyses Na(+)(in) = Na(+)(out). Inhibited by the diuretic drug amiloride. In terms of biological role, could form pH-gated trimeric sodium channels and function as a postsynaptic excitatory receptors in the nervous system. This Danio rerio (Zebrafish) protein is Acid-sensing ion channel 4-A.